An 862-amino-acid chain; its full sequence is uncharacterized protein (862 aa).

Disordered regions lie at residues 45–91 (HPPV…PDEV), 633–824 (RAEQ…GDDD), and 837–862 (GGSGFLTSTAGRNRKSNKQSKTLLLS). Composition is skewed to acidic residues over residues 57–69 (MDVDAESEDEKDE) and 78–91 (PEVESEADEDPDEV). Basic and acidic residues-rich tracts occupy residues 633-650 (RAEQKASKESAKGEDAAK), 657-686 (REAEAGTETPKKKQKEEKSEKPKKTGKAEK), and 694-703 (TKKEKTEKKT). Basic residues predominate over residues 751–760 (EKKKRTAAKK). The span at 761–779 (KTVDRPSGHRPSSKKEYRS) shows a compositional bias: basic and acidic residues.

This is an uncharacterized protein from Ictaluridae (bullhead catfishes).